The following is a 181-amino-acid chain: ATP-dependent protease subunit HslV (181 aa).

Residue threonine 9 is part of the active site. Residues glycine 164, cysteine 167, and threonine 170 each coordinate Na(+).

The protein belongs to the peptidase T1B family. HslV subfamily. A double ring-shaped homohexamer of HslV is capped on each side by a ring-shaped HslU homohexamer. The assembly of the HslU/HslV complex is dependent on binding of ATP.

Its subcellular location is the cytoplasm. It catalyses the reaction ATP-dependent cleavage of peptide bonds with broad specificity.. Its activity is regulated as follows. Allosterically activated by HslU binding. Protease subunit of a proteasome-like degradation complex believed to be a general protein degrading machinery. The polypeptide is ATP-dependent protease subunit HslV (Gemmatimonas aurantiaca (strain DSM 14586 / JCM 11422 / NBRC 100505 / T-27)).